The sequence spans 416 residues: UDP-N-acetylglucosamine 1-carboxyvinyltransferase (416 aa).

22–23 is a binding site for phosphoenolpyruvate; the sequence is KN. Arg92 contacts UDP-N-acetyl-alpha-D-glucosamine. Cys116 (proton donor) is an active-site residue. A 2-(S-cysteinyl)pyruvic acid O-phosphothioketal modification is found at Cys116. UDP-N-acetyl-alpha-D-glucosamine-binding positions include 121-125, Asp304, and Ile326; that span reads RPVDQ.

This sequence belongs to the EPSP synthase family. MurA subfamily.

The protein resides in the cytoplasm. It carries out the reaction phosphoenolpyruvate + UDP-N-acetyl-alpha-D-glucosamine = UDP-N-acetyl-3-O-(1-carboxyvinyl)-alpha-D-glucosamine + phosphate. The protein operates within cell wall biogenesis; peptidoglycan biosynthesis. In terms of biological role, cell wall formation. Adds enolpyruvyl to UDP-N-acetylglucosamine. The polypeptide is UDP-N-acetylglucosamine 1-carboxyvinyltransferase (Janthinobacterium sp. (strain Marseille) (Minibacterium massiliensis)).